The chain runs to 403 residues: Chromatin structure-remodeling complex subunit SFH1 (403 aa).

Residues 58–115 (FPTFDIDSDSNDEEQSSASAGNDDPQANANGGEAAGVNGQGSGDGGSANTGAGRHGKS) are disordered. Over residues 63-72 (IDSDSNDEEQ) the composition is skewed to acidic residues. The segment covering 84 to 94 (ANANGGEAAGV) has biased composition (low complexity). A compositionally biased stretch (gly residues) spans 95–105 (NGQGSGDGGSA).

It belongs to the SNF5 family.

The protein localises to the nucleus. Functionally, part of the chromatin structure-remodeling complex (RSC) which is involved in transcription regulation and nucleosome positioning. RSC is responsible for the transfer of a histone octamer from a nucleosome core particle to naked DNA. The reaction requires ATP and involves an activated RSC-nucleosome intermediate. Remodeling reaction also involves DNA translocation, DNA twist and conformational change. As a reconfigurer of centromeric and flanking nucleosomes, RSC complex is required both for proper kinetochore function in chromosome segregation and, via a PKC1-dependent signaling pathway, for organization of the cellular cytoskeleton. This subunit is essential for mitotic growth and required for cell cycle progression. This Candida glabrata (strain ATCC 2001 / BCRC 20586 / JCM 3761 / NBRC 0622 / NRRL Y-65 / CBS 138) (Yeast) protein is Chromatin structure-remodeling complex subunit SFH1 (SFH1).